The chain runs to 612 residues: Large ribosomal subunit assembly factor BipA (612 aa).

In terms of domain architecture, tr-type G spans 5–200 (NDLRNIAIIA…TIIKHVPAPV (196 aa)). Residues 17-22 (DHGKTT) and 130-133 (NKID) each bind GTP.

It belongs to the TRAFAC class translation factor GTPase superfamily. Classic translation factor GTPase family. BipA subfamily. Monomer.

It localises to the cytoplasm. It catalyses the reaction GTP + H2O = GDP + phosphate + H(+). In terms of biological role, a 50S ribosomal subunit assembly protein with GTPase activity, required for 50S subunit assembly at low temperatures, may also play a role in translation. Binds GTP and analogs. Binds the 70S ribosome between the 30S and 50S subunits, in a similar position as ribosome-bound EF-G; it contacts a number of ribosomal proteins, both rRNAs and the A-site tRNA. The protein is Large ribosomal subunit assembly factor BipA of Bacillus subtilis (strain 168).